Consider the following 135-residue polypeptide: MPTINQLIRKERKKVVKKTKSPALVECPQRRGVCTRVYTTTPKKPNSALRKVAKVRLTSKFEVISYIPGEGHNLQEHSIVLVRGGRVKDLPGVKYHIVRGALDTAGVNKRTVSRSKYGTKKAKATDKKATDNKKK.

Aspartate 89 bears the 3-methylthioaspartic acid mark. Positions 108-135 (NKRTVSRSKYGTKKAKATDKKATDNKKK) are disordered. The span at 111–122 (TVSRSKYGTKKA) shows a compositional bias: basic residues. Basic and acidic residues predominate over residues 123–135 (KATDKKATDNKKK).

This sequence belongs to the universal ribosomal protein uS12 family. In terms of assembly, part of the 30S ribosomal subunit. Contacts proteins S8 and S17. May interact with IF1 in the 30S initiation complex.

Functionally, with S4 and S5 plays an important role in translational accuracy. Interacts with and stabilizes bases of the 16S rRNA that are involved in tRNA selection in the A site and with the mRNA backbone. Located at the interface of the 30S and 50S subunits, it traverses the body of the 30S subunit contacting proteins on the other side and probably holding the rRNA structure together. The combined cluster of proteins S8, S12 and S17 appears to hold together the shoulder and platform of the 30S subunit. This chain is Small ribosomal subunit protein uS12, found in Helicobacter pylori (strain P12).